A 514-amino-acid polypeptide reads, in one-letter code: Pantothenate transporter liz1 (514 aa).

The next 12 helical transmembrane spans lie at 24–44 (LLIK…FINY), 72–92 (INVV…YALQ), 98–118 (LWFS…FAVH), 128–148 (FFMA…LGAW), 159–179 (GIFS…QTAV), 194–214 (WLFI…LFLF), 263–283 (GLCI…NVLM), 300–320 (NYPT…SVIS), 329–349 (WPFG…LLAW), 357–377 (FFAY…FSWA), 390–410 (VVVF…APIM), and 423–443 (LIGL…VSYM).

It belongs to the major facilitator superfamily. Allantoate permease family.

It localises to the cell membrane. Its function is as follows. Transports pantothenate into the cell. The polypeptide is Pantothenate transporter liz1 (liz1) (Schizosaccharomyces pombe (strain 972 / ATCC 24843) (Fission yeast)).